We begin with the raw amino-acid sequence, 277 residues long: tRNA pseudouridine synthase A (277 aa).

Asp57 functions as the Nucleophile in the catalytic mechanism. Residue Tyr115 participates in substrate binding.

This sequence belongs to the tRNA pseudouridine synthase TruA family. Homodimer.

The enzyme catalyses uridine(38/39/40) in tRNA = pseudouridine(38/39/40) in tRNA. Functionally, formation of pseudouridine at positions 38, 39 and 40 in the anticodon stem and loop of transfer RNAs. The sequence is that of tRNA pseudouridine synthase A from Nitratidesulfovibrio vulgaris (strain DSM 19637 / Miyazaki F) (Desulfovibrio vulgaris).